The sequence spans 106 residues: Transcriptional and immune response regulator (106 aa).

As to quaternary structure, monomer. Interacts with NOTCH2 (via ANK repeats), the interaction inhibits the nuclear translocation of NOTCH2 N2ICD. Interacts (C-terminus) with CBY1 (C-terminus), TCIM competes with CTNNB1 for the interaction with CBY1. As to expression, expressed in liver, expression levels decrease in regenerating liver. In bone marrow, expressed in large progenitor-like cells, cells with ring-shaped nuclei and, at lower, levels in hematopietic stem cell-like cells with round nuclei (at protein level).

The protein resides in the cytoplasm. Its subcellular location is the nucleus. The protein localises to the nucleolus. It localises to the nucleus speckle. Seems to be involved in the regulation of cell growth an differentiation, may play different and opposite roles depending on the tissue or cell type. May enhance the WNT-CTNNB1 pathway by relieving antagonistic activity of CBY1. Enhances the proliferation of follicular dendritic cells. Plays a role in the mitogen-activated MAPK2/3 signaling pathway, positively regulates G1-to-S-phase transition of the cell cycle. In endothelial cells, enhances key inflammatory mediators and inflammatory response through the modulation of NF-kappaB transcriptional regulatory activity. Involved in the regulation of heat shock response, seems to play a positive feedback with HSF1 to modulate heat-shock downstream gene expression. Plays a role in the regulation of hematopoiesis even if the mechanisms are unknown. In cancers such as thyroid or lung cancer, it has been described as promoter of cell proliferation, G1-to-S-phase transition and inhibitor of apoptosis. However, it negatively regulates self-renewal of liver cancer cells via suppresion of NOTCH2 signaling. The polypeptide is Transcriptional and immune response regulator (Mus musculus (Mouse)).